The following is a 573-amino-acid chain: LysM domain-containing protein ARB_01155/01156 (573 aa).

An N-terminal signal peptide occupies residues 1-18; it reads MIPRNLISGLFLLPFVVA. N-linked (GlcNAc...) asparagine glycosylation is found at asparagine 46, asparagine 71, and asparagine 283. The 47-residue stretch at 373–419 folds into the LysM domain; sequence RYYEVVAGDQCNTIALHFGITVDAFLSLNTQIDERCSNLWIAYAYCV. Positions 375–405 are lysM domain; that stretch reads YEVVAGDQCNTIALHFGITVDAFLSLNTQID.

The protein localises to the secreted. Its function is as follows. Might have a role in sequestration of chitin oligosaccharides (breakdown products of fungal cell walls that are released during invasion and act as triggers of host immunity) to dampen host defense. The chain is LysM domain-containing protein ARB_01155/01156 from Arthroderma benhamiae (strain ATCC MYA-4681 / CBS 112371) (Trichophyton mentagrophytes).